We begin with the raw amino-acid sequence, 300 residues long: Acetylglutamate kinase (300 aa).

Residues 72–73 (GG), Arg-94, and Asn-197 each bind substrate.

The protein belongs to the acetylglutamate kinase family. ArgB subfamily.

The protein localises to the cytoplasm. It catalyses the reaction N-acetyl-L-glutamate + ATP = N-acetyl-L-glutamyl 5-phosphate + ADP. It functions in the pathway amino-acid biosynthesis; L-arginine biosynthesis; N(2)-acetyl-L-ornithine from L-glutamate: step 2/4. Its function is as follows. Catalyzes the ATP-dependent phosphorylation of N-acetyl-L-glutamate. In Aromatoleum aromaticum (strain DSM 19018 / LMG 30748 / EbN1) (Azoarcus sp. (strain EbN1)), this protein is Acetylglutamate kinase.